Here is a 328-residue protein sequence, read N- to C-terminus: RNA binding protein fox-1 homolog 3 (328 aa).

Over residues 1–30 the composition is skewed to pro residues; the sequence is MAQPYPPAQYPPPPQNGIPAEYAPPPPHPT. Positions 1–106 are disordered; the sequence is MAQPYPPAQY…QPKRLHVSNI (106 aa). Over residues 49–87 the composition is skewed to polar residues; sequence TPAQTHPEQPSSDTSTQPITGAQTVPQTDEAAQTDSQPL. The 74-residue stretch at 99 to 172 folds into the RRM domain; it reads KRLHVSNIPF…NPVVGAVYGP (74 aa). An Asymmetric dimethylarginine; alternate modification is found at Arg192. Arg192 is subject to Omega-N-methylarginine; alternate. Position 288 is an asymmetric dimethylarginine (Arg288).

It is found in the nucleus. Its subcellular location is the cytoplasm. Functionally, pre-mRNA alternative splicing regulator. Regulates alternative splicing of RBFOX2 to enhance the production of mRNA species that are targeted for nonsense-mediated decay (NMD). The polypeptide is RNA binding protein fox-1 homolog 3 (RBFOX3) (Bos taurus (Bovine)).